Reading from the N-terminus, the 240-residue chain is 5-oxoprolinase subunit B (240 aa).

G194–T201 lines the ATP pocket.

It belongs to the PxpB family. In terms of assembly, forms a complex composed of PxpA, PxpB and PxpC. Interacts with PxpC (KipA). Interaction with PxpC prevents the inhibitory action of PxpB (KipI). Interacts with KinA. Two PxpB monomers bind via their C-domains at a conserved proline in the KinA dimerization and histidine-phosphotransfer (DHp) domain.

The enzyme catalyses 5-oxo-L-proline + ATP + 2 H2O = L-glutamate + ADP + phosphate + H(+). Catalyzes the cleavage of 5-oxoproline to form L-glutamate coupled to the hydrolysis of ATP to ADP and inorganic phosphate. In addition, is a potent inhibitor of the autophosphorylation reaction of kinase A (kinA) and its reverse reaction, but does not inhibit phosphate transfer to the Spo0F response regulator once kinase A is phosphorylated. Is an inhibitor of the catalytic domain of kinase A affecting the ATP/ADP reactions and not the phosphotransferase functions of this domain. The inhibition is non-competitive with respect to ATP. This is 5-oxoprolinase subunit B from Bacillus subtilis (strain 168).